A 267-amino-acid chain; its full sequence is uncharacterized protein (267 aa).

The protein belongs to the glycosyltransferase 2 family.

This is an uncharacterized protein from Haemophilus influenzae (strain ATCC 51907 / DSM 11121 / KW20 / Rd).